Here is a 363-residue protein sequence, read N- to C-terminus: Cyanuric acid amidohydrolase (363 aa).

Residues methionine 1–proline 103 are RU A. Residues arginine 51 and serine 82–glycine 83 each bind substrate. The RU B stretch occupies residues glycine 111 to proline 247. Lysine 161 is a catalytic residue. Substrate contacts are provided by residues arginine 193 and serine 230–alanine 231. Catalysis depends on serine 230, which acts as the Nucleophile. The tract at residues tyrosine 253–serine 363 is RU C. Mg(2+) is bound at residue glutamate 297. Residues arginine 324 and serine 343 to glycine 344 each bind substrate. Alanine 346, glutamine 349, glycine 350, proline 351, and glycine 354 together coordinate Mg(2+).

The protein belongs to the cyclic amide hydrolase (CyAH) family. As to quaternary structure, homotetramer.

The catalysed reaction is cyanurate + H2O = 1-carboxybiuret + H(+). It functions in the pathway xenobiotic degradation; atrazine degradation; biuret from cyanurate: step 1/1. Inhibited by barbituric acid. Responsible for the hydrolysis of cyanuric acid, an intermediate formed during catabolism of s-triazine based compounds in herbicides such as atrazine and polymers such as melamine. Catalyzes the hydrolytic opening of the s-triazine ring of cyanuric acid (2,4,6-trihydroxy-s-triazine) to yield carbon dioxide and carboxybiuret, which spontaneously decarboxylates to biuret. The sequence is that of Cyanuric acid amidohydrolase from Ectopseudomonas oleovorans (strain CECT 5344) (Pseudomonas pseudoalcaligenes).